The chain runs to 291 residues: ATP synthase gamma chain (291 aa).

Belongs to the ATPase gamma chain family. F-type ATPases have 2 components, CF(1) - the catalytic core - and CF(0) - the membrane proton channel. CF(1) has five subunits: alpha(3), beta(3), gamma(1), delta(1), epsilon(1). CF(0) has three main subunits: a, b and c.

The protein resides in the cell inner membrane. Its function is as follows. Produces ATP from ADP in the presence of a proton gradient across the membrane. The gamma chain is believed to be important in regulating ATPase activity and the flow of protons through the CF(0) complex. This chain is ATP synthase gamma chain, found in Verminephrobacter eiseniae (strain EF01-2).